The primary structure comprises 332 residues: tRNA U34 carboxymethyltransferase (332 aa).

Residues K96, W110, K115, G135, 157-159 (DPT), 190-191 (IE), M205, Y209, and R324 contribute to the carboxy-S-adenosyl-L-methionine site.

The protein belongs to the class I-like SAM-binding methyltransferase superfamily. CmoB family. Homotetramer.

It carries out the reaction carboxy-S-adenosyl-L-methionine + 5-hydroxyuridine(34) in tRNA = 5-carboxymethoxyuridine(34) in tRNA + S-adenosyl-L-homocysteine + H(+). Its function is as follows. Catalyzes carboxymethyl transfer from carboxy-S-adenosyl-L-methionine (Cx-SAM) to 5-hydroxyuridine (ho5U) to form 5-carboxymethoxyuridine (cmo5U) at position 34 in tRNAs. The chain is tRNA U34 carboxymethyltransferase from Alteromonas mediterranea (strain DSM 17117 / CIP 110805 / LMG 28347 / Deep ecotype).